The primary structure comprises 188 residues: dCTP deaminase (188 aa).

Residues 111–116 (KSTYAR), 135–137 (TLE), Q156, Y170, and Q180 contribute to the dCTP site. Residue E137 is the Proton donor/acceptor of the active site.

Belongs to the dCTP deaminase family. As to quaternary structure, homotrimer.

The enzyme catalyses dCTP + H2O + H(+) = dUTP + NH4(+). Its pathway is pyrimidine metabolism; dUMP biosynthesis; dUMP from dCTP (dUTP route): step 1/2. In terms of biological role, catalyzes the deamination of dCTP to dUTP. The sequence is that of dCTP deaminase from Thiobacillus denitrificans (strain ATCC 25259 / T1).